A 498-amino-acid chain; its full sequence is Guanosine-5'-triphosphate,3'-diphosphate pyrophosphatase (498 aa).

This sequence belongs to the GppA/Ppx family. GppA subfamily.

It carries out the reaction guanosine 3'-diphosphate 5'-triphosphate + H2O = guanosine 3',5'-bis(diphosphate) + phosphate + H(+). It participates in purine metabolism; ppGpp biosynthesis; ppGpp from GTP: step 2/2. Functionally, catalyzes the conversion of pppGpp to ppGpp. Guanosine pentaphosphate (pppGpp) is a cytoplasmic signaling molecule which together with ppGpp controls the 'stringent response', an adaptive process that allows bacteria to respond to amino acid starvation, resulting in the coordinated regulation of numerous cellular activities. The chain is Guanosine-5'-triphosphate,3'-diphosphate pyrophosphatase from Serratia proteamaculans (strain 568).